The primary structure comprises 326 residues: MEDHGFEELSTRTHDLNVRRLTKGNINFLLSTGQETYSVEDSGLLRILLVGKSGCGKSATGNSILRRPAFESRLRGQSVTRTSQAEMGTWEGRSFLVVDTPPIFESKIQNQDMDKDIGNCYLMCAPGPHVLLLVTQLGRYTVEDAMAVRMVKQIFGVGVMRYMIVLFTHKEDLADESLEEFVTHTGNLDLHRLVQECGRRYCAFNNKASGEEQQGQLAELMALVRRLEQEHEGSFHSNDLFVYTQVFLRGGYSEHQEPYKFYLTKVRQEVEKQKRELEEQEGSWMAKMLCRVTSCLDWHIAVSVLLIVLGLTLLITLINMYIGRWK.

At 1 to 297 (MEDHGFEELS…MLCRVTSCLD (297 aa)) the chain is on the cytoplasmic side. In terms of domain architecture, AIG1-type G spans 42–245 (SGLLRILLVG…HSNDLFVYTQ (204 aa)). GTP contacts are provided by residues 51–59 (GKSGCGKSA), serine 72, 169–171 (HKE), and asparagine 206. The helical; Anchor for type IV membrane protein transmembrane segment at 298-318 (WHIAVSVLLIVLGLTLLITLI) threads the bilayer. The Lumenal segment spans residues 319–326 (NMYIGRWK).

The protein belongs to the TRAFAC class TrmE-Era-EngA-EngB-Septin-like GTPase superfamily. AIG1/Toc34/Toc159-like paraseptin GTPase family. IAN subfamily. Interacts with BAD, BAK1, BAX, BCL2, BCL2L1/Bcl-xL and BCL2L11/BimEL. The interaction with BAX is increased, when cells initiate apoptosis upon IL2 withdrawal. Forms a complex with BCL2L1 or MCL1 and HSPA8/HSC70; the interaction between HSPA8 and BCL2L1 or MCL1 is impaired in the absence of GIMAP5. May interact (via N-terminus) with microtubules. Primarily expressed in spleen, heart, lung and intestine and, at lower levels, in kidney, stomach and muscle. Expressed in thymus and lymph nodes (at protein level). In the spleen, expressed in periarteriolar lymphatic sheets. Isoform 2: Expressed at higher levels in T lymphocytes compared to isoform 1.

It localises to the lysosome membrane. Its subcellular location is the endosome. The protein localises to the multivesicular body membrane. It is found in the endosome membrane. Functionally, required for mitochondrial integrity and T-cell survival. May contribute to T-cell quiescence. Plays a role in T lymphocyte development and the optimal generation of CD4/CD8 double-positive thymocytes. Inhibitor of GSK3A, possibly by sequestering GSK3A in cytoplasmic vesicles and impairing its translocation to the nucleus. Consequently, impairs GSK3A-dependent transcriptional program and regulation of the DNA damage response occurring during T cells proliferation. Required for the survival of peripheral T cells, natural killer (NK) and NK T-cell development and the maintenance of normal liver function. Promotes the survival of quiescent T-cells. May regulate Ca(2+) homeostasis by modulating lysosomal Ca(2+) stores, preventing its accumulation in the absence of T cell activation. May play a role in mitochondrial DNA segregation in hematopoietic tissues. Is a regulator of liver endothelial cell homeostasis. The sequence is that of GTPase IMAP family member 5 (Gimap5) from Rattus norvegicus (Rat).